Consider the following 141-residue polypeptide: Cystatin (141 aa).

Residues 1–26 (MVHSQLPVAGPLRLLCALLLLPSATM) form the signal peptide. Residues 29–129 (GGLSPRSVTD…CHFQVWSRPW (101 aa)) enclose the Cystatin domain. A Secondary area of contact motif is present at residues 73–77 (QVVSG). 2 disulfide bridges follow: cysteine 91–cysteine 107 and cysteine 120–cysteine 140.

The protein belongs to the cystatin family. As to expression, expressed at a low level by the venom gland (at protein level).

Its subcellular location is the secreted. In terms of biological role, inhibits various C1 cysteine proteases including cathepsin L, papain and cathepsin B. This protein has no toxic activity and its function in the venom is unknown. It may play a role as a housekeeping or regulatory protein. The polypeptide is Cystatin (Pseudechis australis (Mulga snake)).